The sequence spans 475 residues: Argininosuccinate lyase (475 aa).

The protein belongs to the lyase 1 family. Argininosuccinate lyase subfamily.

Its subcellular location is the cytoplasm. It catalyses the reaction 2-(N(omega)-L-arginino)succinate = fumarate + L-arginine. Its pathway is amino-acid biosynthesis; L-arginine biosynthesis; L-arginine from L-ornithine and carbamoyl phosphate: step 3/3. This is Argininosuccinate lyase from Leifsonia xyli subsp. xyli (strain CTCB07).